The chain runs to 367 residues: Aldo-keto reductase AMT2 (367 aa).

Position 76 (Asp-76) interacts with NADP(+). Catalysis depends on Tyr-81, which acts as the Proton donor. A substrate-binding site is contributed by His-173. NADP(+) contacts are provided by residues 203–204 (SS), Gln-229, 258–268 (GPLAAGKLARP), and 330–338 (SSVERMDEV). The tract at residues 346-367 (LSDEEESRLEDPYKAQPPQGHS) is disordered.

This sequence belongs to the aldo/keto reductase family.

It functions in the pathway mycotoxin biosynthesis. Its function is as follows. Aldo-keto reductase; part of the gene clusters that mediate the biosynthesis of AM-toxins, host-selective toxins (HSTs) causing Alternaria blotch on apple, a worldwide distributed disease. AM-toxins are cyclic depsipeptides containing the 3 residues 2-hydroxy-isovaleric acid (2-HIV), dehydroalanine, L-alanine which are common for all 3 AM-toxins I to III. The fourth precursor is L-alpha-amino-methoxyphenyl-valeric acid (L-Amv) for AM-toxin I, L-alpha-amino-phenyl-valeric acid (L-Apv) for AM-toxin II, and L-alpha-amino-hydroxyphenyl-valeric acid (L-Ahv) for AM-toxin III. AM-toxins have two target sites for affecting susceptible apple cells; they cause invagination of the plasma membrane and electrolyte loss and chloroplast disorganization. The non-ribosomal peptide synthetase AMT1 contains 4 catalytic modules and is responsible for activation of each residue in AM-toxin. The aldo-keto reductase AMT2 catalyzes the conversion of 2-keto-isovaleric acid (2-KIV) to 2-hydroxy-isovaleric acid (2-HIV), one of the precursor residues incorporated by AMT1 during AM-toxin biosynthesis, by reduction of its ketone to an alcohol. The cytochrome P450 monooxygenase AMT3 and the thioesterase AMT4 are also important for AM-toxin production, but their exact function within the AM-toxin biosynthesis are not known yet. Up to 21 proteins (including AMT1 to AMT4) are predicted to be involved in AM-toxin biosynthesis since their expression ishighly up-regulated in AM-toxin-producing cultures. This chain is Aldo-keto reductase AMT2, found in Alternaria alternata (Alternaria rot fungus).